Here is an 87-residue protein sequence, read N- to C-terminus: MVNMKASMFLTFAGLVLLFVVCHASESEEKEFPKEMLSSIFAVDDDFKQEERDCAGYMRECKEKLCCSGYVCSSRWKWCVLSAPWRR.

Positions methionine 1 to alanine 24 are cleaved as a signal peptide. A propeptide spanning residues serine 25–arginine 52 is cleaved from the precursor. Cystine bridges form between cysteine 54–cysteine 67, cysteine 61–cysteine 72, and cysteine 66–cysteine 79.

It belongs to the neurotoxin 10 (Hwtx-1) family. 51 (Hntx-8) subfamily. Hntx-8 sub-subfamily. Expressed by the venom gland.

It localises to the secreted. In terms of biological role, ion channel inhibitor. The sequence is that of U3-theraphotoxin-Hhn1c from Cyriopagopus hainanus (Chinese bird spider).